We begin with the raw amino-acid sequence, 233 residues long: Leucyl/phenylalanyl-tRNA--protein transferase (233 aa).

The protein belongs to the L/F-transferase family.

The protein resides in the cytoplasm. The enzyme catalyses N-terminal L-lysyl-[protein] + L-leucyl-tRNA(Leu) = N-terminal L-leucyl-L-lysyl-[protein] + tRNA(Leu) + H(+). The catalysed reaction is N-terminal L-arginyl-[protein] + L-leucyl-tRNA(Leu) = N-terminal L-leucyl-L-arginyl-[protein] + tRNA(Leu) + H(+). It catalyses the reaction L-phenylalanyl-tRNA(Phe) + an N-terminal L-alpha-aminoacyl-[protein] = an N-terminal L-phenylalanyl-L-alpha-aminoacyl-[protein] + tRNA(Phe). In terms of biological role, functions in the N-end rule pathway of protein degradation where it conjugates Leu, Phe and, less efficiently, Met from aminoacyl-tRNAs to the N-termini of proteins containing an N-terminal arginine or lysine. In Shewanella denitrificans (strain OS217 / ATCC BAA-1090 / DSM 15013), this protein is Leucyl/phenylalanyl-tRNA--protein transferase.